Consider the following 145-residue polypeptide: Large ribosomal subunit protein uL16 (145 aa).

Positions 1 to 21 are enriched in basic residues; sequence MLVPTRVKHRKQHRGRMHGKA. Residues 1–22 form a disordered region; it reads MLVPTRVKHRKQHRGRMHGKAT.

The protein belongs to the universal ribosomal protein uL16 family. Part of the 50S ribosomal subunit.

Binds 23S rRNA and is also seen to make contacts with the A and possibly P site tRNAs. This is Large ribosomal subunit protein uL16 from Desulfitobacterium hafniense (strain Y51).